The chain runs to 23 residues: Endochitinase B (23 aa).

This sequence belongs to the glycosyl hydrolase 19 family. Chitinase class I subfamily.

The catalysed reaction is Random endo-hydrolysis of N-acetyl-beta-D-glucosaminide (1-&gt;4)-beta-linkages in chitin and chitodextrins.. Functionally, defense against chitin-containing fungal pathogens. The protein is Endochitinase B of Pisum sativum (Garden pea).